A 347-amino-acid chain; its full sequence is MQSGKMKALMKKDGAFGAVLTEVPIPEIDKHEVLIKVKAASICGTDVHIYNWDQWARQRIKTPYVFGHEFSGIVEGVGENVSSVKVGEYVSAETHIVCGECVPCLTGKSHVCTNTAIIGVDTAGCFAEYVKVPADNIWRNPADMDPSIASIQEPLGNAVHTVLESQPAGGTTAVIGCGPIGLMAVAVAKAAGASQVIAIDKNEYRLRLAKQMGATCTVSIEKEDPLKIVSALTSGEGADLVCEMSGHPSAIAQGLAMAANGGRFHILSLPEHPVTIDLTNKVVFKGLTIQGITGRKMFSTWRQVSQLISSNMIDLAPVITHQFPLEEFEKGFELMRSGQCGKVILIP.

Cys43 is a binding site for Zn(2+). Residues Thr45 and His48 each act as charge relay system in the active site. Zn(2+) is bound by residues His68, Glu69, Cys98, Cys101, Cys104, and Cys112. Residues Ile180, Asp200, Arg205, 267-269 (LSL), and 292-293 (IT) each bind NAD(+).

The protein belongs to the zinc-containing alcohol dehydrogenase family. Homotetramer. Zn(2+) serves as cofactor.

The protein localises to the cytoplasm. The enzyme catalyses L-threonine + NAD(+) = (2S)-2-amino-3-oxobutanoate + NADH + H(+). The protein operates within amino-acid degradation; L-threonine degradation via oxydo-reductase pathway; glycine from L-threonine: step 1/2. Functionally, catalyzes the NAD(+)-dependent oxidation of L-threonine to 2-amino-3-ketobutyrate. The protein is L-threonine 3-dehydrogenase of Bacillus subtilis (strain 168).